Reading from the N-terminus, the 98-residue chain is Large ribosomal subunit protein bL21 (98 aa).

The protein belongs to the bacterial ribosomal protein bL21 family. As to quaternary structure, part of the 50S ribosomal subunit. Contacts protein L20.

Functionally, this protein binds to 23S rRNA in the presence of protein L20. The chain is Large ribosomal subunit protein bL21 from Novosphingobium aromaticivorans (strain ATCC 700278 / DSM 12444 / CCUG 56034 / CIP 105152 / NBRC 16084 / F199).